The sequence spans 142 residues: Putative pre-16S rRNA nuclease (142 aa).

This sequence belongs to the YqgF nuclease family.

The protein resides in the cytoplasm. Its function is as follows. Could be a nuclease involved in processing of the 5'-end of pre-16S rRNA. This Staphylococcus aureus (strain JH1) protein is Putative pre-16S rRNA nuclease.